Reading from the N-terminus, the 306-residue chain is tRNA dimethylallyltransferase (306 aa).

Position 9 to 16 (G9 to T16) interacts with ATP. Residue T11–T16 coordinates substrate. An interaction with substrate tRNA region spans residues D34–Q37.

This sequence belongs to the IPP transferase family. Monomer. The cofactor is Mg(2+).

The catalysed reaction is adenosine(37) in tRNA + dimethylallyl diphosphate = N(6)-dimethylallyladenosine(37) in tRNA + diphosphate. Functionally, catalyzes the transfer of a dimethylallyl group onto the adenine at position 37 in tRNAs that read codons beginning with uridine, leading to the formation of N6-(dimethylallyl)adenosine (i(6)A). The sequence is that of tRNA dimethylallyltransferase from Lactobacillus helveticus (strain DPC 4571).